The sequence spans 415 residues: Serine/threonine transporter SstT (415 aa).

Helical transmembrane passes span 23–43 (ILIG…AAIA), 47–67 (LGTL…LMLV), 85–105 (ILFL…LFSF), 144–164 (ALLN…GFAL), 181–201 (AVTF…FGLV), 220–240 (LLVL…LLVF), 293–313 (IPLG…VLTL), and 333–353 (VVAS…LLLI).

It belongs to the dicarboxylate/amino acid:cation symporter (DAACS) (TC 2.A.23) family.

Its subcellular location is the cell inner membrane. The enzyme catalyses L-serine(in) + Na(+)(in) = L-serine(out) + Na(+)(out). The catalysed reaction is L-threonine(in) + Na(+)(in) = L-threonine(out) + Na(+)(out). Involved in the import of serine and threonine into the cell, with the concomitant import of sodium (symport system). This is Serine/threonine transporter SstT from Klebsiella pneumoniae subsp. pneumoniae (strain ATCC 700721 / MGH 78578).